The sequence spans 260 residues: Cytosolic Fe-S cluster assembly factor Nubp2 homolog 1 (260 aa).

14–21 (GKGGVGKS) contacts ATP. Positions 188 and 191 each coordinate [4Fe-4S] cluster.

The protein belongs to the Mrp/NBP35 ATP-binding proteins family. NUBP2/CFD1 subfamily. As to quaternary structure, heterotetramer of 2 Nubp1 and 2 Nubp2 chains. [4Fe-4S] cluster is required as a cofactor.

The protein resides in the cytoplasm. Functionally, component of the cytosolic iron-sulfur (Fe/S) protein assembly (CIA) machinery. Required for maturation of extramitochondrial Fe-S proteins. The Nubp1-Nubp2 heterotetramer forms a Fe-S scaffold complex, mediating the de novo assembly of an Fe-S cluster and its transfer to target apoproteins. The chain is Cytosolic Fe-S cluster assembly factor Nubp2 homolog 1 from Drosophila yakuba (Fruit fly).